A 285-amino-acid polypeptide reads, in one-letter code: 4,4'-diapophytoene synthase (285 aa).

(2E,6E)-farnesyl diphosphate is bound by residues tyrosine 18 to serine 21, tyrosine 41, and arginine 45. Mg(2+)-binding residues include aspartate 48 and aspartate 52. Residue glutamine 163 participates in (2E,6E)-farnesyl diphosphate binding. Position 166 (asparagine 166) interacts with Mg(2+). Residue arginine 169 participates in (2E,6E)-farnesyl diphosphate binding. Aspartate 170 is a Mg(2+) binding site. Residue tyrosine 247 participates in (2E,6E)-farnesyl diphosphate binding.

Belongs to the phytoene/squalene synthase family. CrtM subfamily. Mg(2+) is required as a cofactor.

The enzyme catalyses 2 (2E,6E)-farnesyl diphosphate = 15-cis-4,4'-diapophytoene + 2 diphosphate. It participates in carotenoid biosynthesis; staphyloxanthin biosynthesis; staphyloxanthin from farnesyl diphosphate: step 1/5. In terms of biological role, involved in the biosynthesis of the yellow-orange carotenoid staphyloxanthin, which plays a role in the virulence via its protective function against oxidative stress. Catalyzes the head-to-head condensation of two molecules of farnesyl diphosphate (FPP) into the colorless C(30) carotenoid 4,4'-diapophytoene (dehydrosqualene). This is 4,4'-diapophytoene synthase (crtM) from Staphylococcus haemolyticus (strain JCSC1435).